Consider the following 906-residue polypeptide: Protein translocase subunit SecA (906 aa).

ATP-binding positions include Q89, 107 to 111 (GEGKT), and D502. C890, C892, C901, and H902 together coordinate Zn(2+).

Belongs to the SecA family. In terms of assembly, monomer and homodimer. Part of the essential Sec protein translocation apparatus which comprises SecA, SecYEG and auxiliary proteins SecDF-YajC and YidC. Requires Zn(2+) as cofactor.

Its subcellular location is the cell inner membrane. The protein localises to the cytoplasm. It catalyses the reaction ATP + H2O + cellular proteinSide 1 = ADP + phosphate + cellular proteinSide 2.. Functionally, part of the Sec protein translocase complex. Interacts with the SecYEG preprotein conducting channel. Has a central role in coupling the hydrolysis of ATP to the transfer of proteins into and across the cell membrane, serving both as a receptor for the preprotein-SecB complex and as an ATP-driven molecular motor driving the stepwise translocation of polypeptide chains across the membrane. The chain is Protein translocase subunit SecA from Bartonella quintana (strain Toulouse) (Rochalimaea quintana).